We begin with the raw amino-acid sequence, 498 residues long: Lysine--tRNA ligase (498 aa).

2 residues coordinate Mg(2+): Glu407 and Glu414.

This sequence belongs to the class-II aminoacyl-tRNA synthetase family. As to quaternary structure, homodimer. Requires Mg(2+) as cofactor.

It is found in the cytoplasm. It catalyses the reaction tRNA(Lys) + L-lysine + ATP = L-lysyl-tRNA(Lys) + AMP + diphosphate. The protein is Lysine--tRNA ligase of Sinorhizobium medicae (strain WSM419) (Ensifer medicae).